Reading from the N-terminus, the 88-residue chain is MMLSKVVLLALLLSLSCLWVAKASEQRTRVSEVVREAEIHDGGQCTDDDICNKNCLDCIARQCIFQQCVCSKRFFPPNSQPNLRVKKH.

Positions 1-23 (MMLSKVVLLALLLSLSCLWVAKA) are cleaved as a signal peptide. Cystine bridges form between C45–C63, C51–C68, and C55–C70.

This sequence belongs to the DEFL family.

It is found in the secreted. The sequence is that of Defensin-like protein 267 from Arabidopsis thaliana (Mouse-ear cress).